We begin with the raw amino-acid sequence, 243 residues long: PF03932 family protein CutC (243 aa).

It belongs to the CutC family.

It is found in the cytoplasm. The chain is PF03932 family protein CutC from Parabacteroides distasonis (strain ATCC 8503 / DSM 20701 / CIP 104284 / JCM 5825 / NCTC 11152).